The sequence spans 125 residues: uncharacterized protein (125 aa).

The segment covering 1–33 (MLPHQNSSYTRQGTNDAQANDMRSPSQLPTSVN) has biased composition (polar residues). 2 disordered regions span residues 1-35 (MLPHQNSSYTRQGTNDAQANDMRSPSQLPTSVNIE) and 44-63 (SEKLNTPMHNRSRSGIKKHT). Over residues 53-63 (NRSRSGIKKHT) the composition is skewed to basic residues.

This is an uncharacterized protein from Schizosaccharomyces pombe (strain 972 / ATCC 24843) (Fission yeast).